A 47-amino-acid chain; its full sequence is Protein RL9A (47 aa).

The chain crosses the membrane as a helical span at residues 27 to 47 (CMIIVIMIAISIWILTYVLFL).

Its subcellular location is the host membrane. This Human cytomegalovirus (strain Merlin) (HHV-5) protein is Protein RL9A (RL9A).